Here is a 501-residue protein sequence, read N- to C-terminus: NAD(P)H-quinone oxidoreductase chain 4, chloroplastic (501 aa).

14 consecutive transmembrane segments (helical) span residues 5-25, 38-58, 88-108, 114-131, 135-155, 168-188, 209-229, 243-263, 273-293, 306-326, 331-351, 387-407, 417-437, and 464-484; these read FPWL…IFFL, TCIC…HFQL, IGPI…AWPV, LFYL…GLFS, LLLF…LLSM, FILY…GMGL, ALEI…SPII, HYST…YGLI, AHSL…IYAA, IACS…SITD, GAIL…FLSG, LALP…GIIT, ILIT…LLSM, and FVSI…DCVF.

The protein belongs to the complex I subunit 4 family.

The protein resides in the plastid. It localises to the chloroplast thylakoid membrane. It catalyses the reaction a plastoquinone + NADH + (n+1) H(+)(in) = a plastoquinol + NAD(+) + n H(+)(out). The catalysed reaction is a plastoquinone + NADPH + (n+1) H(+)(in) = a plastoquinol + NADP(+) + n H(+)(out). The polypeptide is NAD(P)H-quinone oxidoreductase chain 4, chloroplastic (Dioscorea elephantipes (Elephant's foot yam)).